Here is a 293-residue protein sequence, read N- to C-terminus: NAD kinase (293 aa).

Residue aspartate 72 is the Proton acceptor of the active site. Residues 72 to 73 (DG), 146 to 147 (ND), arginine 157, arginine 174, aspartate 176, 187 to 192 (TAYALS), and glutamine 247 contribute to the NAD(+) site.

It belongs to the NAD kinase family. A divalent metal cation is required as a cofactor.

It localises to the cytoplasm. It carries out the reaction NAD(+) + ATP = ADP + NADP(+) + H(+). Its function is as follows. Involved in the regulation of the intracellular balance of NAD and NADP, and is a key enzyme in the biosynthesis of NADP. Catalyzes specifically the phosphorylation on 2'-hydroxyl of the adenosine moiety of NAD to yield NADP. This Chromohalobacter salexigens (strain ATCC BAA-138 / DSM 3043 / CIP 106854 / NCIMB 13768 / 1H11) protein is NAD kinase.